Consider the following 85-residue polypeptide: Cell division topological specificity factor (85 aa).

This sequence belongs to the MinE family.

Functionally, prevents the cell division inhibition by proteins MinC and MinD at internal division sites while permitting inhibition at polar sites. This ensures cell division at the proper site by restricting the formation of a division septum at the midpoint of the long axis of the cell. This chain is Cell division topological specificity factor, found in Shewanella baltica (strain OS223).